Here is a 139-residue protein sequence, read N- to C-terminus: Crossover junction endodeoxyribonuclease Hje (139 aa).

Mg(2+) is bound by residues E10, D39, and E52.

The protein belongs to the Holliday junction resolvase Hjc family. Hje subfamily. Homodimer. Mg(2+) is required as a cofactor.

The enzyme catalyses Endonucleolytic cleavage at a junction such as a reciprocal single-stranded crossover between two homologous DNA duplexes (Holliday junction).. Its function is as follows. A structure-specific endonuclease that resolves Holliday junction (HJ) intermediates during genetic recombination. Acts only on 4-way DNA junctions in a sequence non-specific manner; introduces paired nicks in opposing strands 2 bases 3' of the point of strand exchange only on continuous strands of 4-way junction DNA. Cleaves both mobile and immobile junctions. In terms of biological role, redundant function with Holliday junction resolvase Hjc. This chain is Crossover junction endodeoxyribonuclease Hje, found in Sulfolobus acidocaldarius (strain ATCC 33909 / DSM 639 / JCM 8929 / NBRC 15157 / NCIMB 11770).